The chain runs to 59 residues: Large ribosomal subunit protein bL32c (59 aa).

A disordered region spans residues 36–59 (KSRSFSGVSEHPKPKGFSRQQTNK).

This sequence belongs to the bacterial ribosomal protein bL32 family.

It localises to the plastid. Its subcellular location is the chloroplast. This is Large ribosomal subunit protein bL32c from Oryza nivara (Indian wild rice).